We begin with the raw amino-acid sequence, 405 residues long: Replication factor C large subunit (405 aa).

47–54 (GPPGVGKT) is a binding site for ATP.

This sequence belongs to the activator 1 small subunits family. RfcL subfamily. As to quaternary structure, heteromultimer composed of small subunits (RfcS) and large subunits (RfcL).

Part of the RFC clamp loader complex which loads the PCNA sliding clamp onto DNA. The protein is Replication factor C large subunit of Saccharolobus islandicus (strain L.S.2.15 / Lassen #1) (Sulfolobus islandicus).